We begin with the raw amino-acid sequence, 241 residues long: ATP synthase subunit a (241 aa).

A run of 5 helical transmembrane segments spans residues 30–50 (GQVFLTSWILLGALLVFISLG), 91–111 (FIGTLFLFVFVSNWGGALIPW), 128–148 (INTTIALALLVSLSYFYAGLS), 193–213 (LVVGVLVFLVPLILPIPVMFL), and 214–234 (GLFTSAIQALIFATLAAYYIG).

Belongs to the ATPase A chain family. In terms of assembly, F-type ATPases have 2 components, CF(1) - the catalytic core - and CF(0) - the membrane proton channel. CF(1) has five subunits: alpha(3), beta(3), gamma(1), delta(1), epsilon(1). CF(0) has four main subunits: a, b, b' and c.

The protein resides in the cellular thylakoid membrane. In terms of biological role, key component of the proton channel; it plays a direct role in the translocation of protons across the membrane. The sequence is that of ATP synthase subunit a from Prochlorococcus marinus (strain MIT 9301).